The following is a 203-amino-acid chain: uncharacterized protein (203 aa).

This is an uncharacterized protein from Aquifex aeolicus (strain VF5).